The sequence spans 515 residues: Cytochrome P450 monooxygenase mfmA (515 aa).

Residues 3–23 form a helical membrane-spanning segment; the sequence is KISIIPIVGVALSLAIILQLG. Cys-453 is a heme binding site.

It belongs to the cytochrome P450 family. Heme is required as a cofactor.

It is found in the membrane. It participates in secondary metabolite biosynthesis; terpenoid biosynthesis. Functionally, cytochrome P450 monooxygenase; part of the gene cluster that mediates the biosynthesis of the phthalide-terpenoid hybrid 11'-O-desmethylfendlerol. Within the pathway, mfma and mfmC act together to convert 3,5-dimethylorsellinic acid (DMOA) into the phthalide 5,7-dihydroxy-4-(hydroxymethyl)-6-methylphthalide. MfmA performs especially an hydroxylation at C-9. The biosynthesis of 11'-O-desmethylfendlerol begins with the NR-PKS mfmB that forms 3,5-dimethylorsellinic acid (DMOA), which is then transformed into the phthalide 5,7-dihydroxy-4-(hydroxymethyl)-6-methylphthalide by the cytochrome P450 monooxygenase mfmA and the hydrolase mfmC. Subsequently, the methyltransferase mfmE catalyzes 7-O-methylation to yield 5-hydroxy-4-(hydroxymethyl)-7-methoxy-6-methylphthalide, which undergoes C-3 hydroxylation by the cytochrome P450 monooxygenase mfmF. The resultant cyclopolic acid (2,5-dihydroxy-4-(hydroxymethyl)-7-methoxy-6-methylphthalide) is then farnesylated by the DMATS-type prenyltransferase mfmD to afford 5-O-farnesylcyclopolic acid. Finally, the Pyr4-family terpene cyclase mfmH cyclizes the farnesyl moiety of 5-O-farnesylcyclopolic acid into a drimane-like structure, thus completing the biosynthesis of 11'-O-desmethylfendlerol. This is Cytochrome P450 monooxygenase mfmA from Annulohypoxylon moriforme (Filamentous fungus).